Here is a 956-residue protein sequence, read N- to C-terminus: Isoleucine--tRNA ligase (956 aa).

The 'HIGH' region motif lies at 60-70; it reads PYANGHIHVGH. Glutamate 583 lines the L-isoleucyl-5'-AMP pocket. The short motif at 624-628 is the 'KMSKS' region element; that stretch reads KMSKS. Lysine 627 is an ATP binding site. 4 residues coordinate Zn(2+): cysteine 921, cysteine 924, cysteine 938, and cysteine 941.

This sequence belongs to the class-I aminoacyl-tRNA synthetase family. IleS type 1 subfamily. In terms of assembly, monomer. The cofactor is Zn(2+).

It is found in the cytoplasm. The enzyme catalyses tRNA(Ile) + L-isoleucine + ATP = L-isoleucyl-tRNA(Ile) + AMP + diphosphate. In terms of biological role, catalyzes the attachment of isoleucine to tRNA(Ile). As IleRS can inadvertently accommodate and process structurally similar amino acids such as valine, to avoid such errors it has two additional distinct tRNA(Ile)-dependent editing activities. One activity is designated as 'pretransfer' editing and involves the hydrolysis of activated Val-AMP. The other activity is designated 'posttransfer' editing and involves deacylation of mischarged Val-tRNA(Ile). This chain is Isoleucine--tRNA ligase, found in Aquifex aeolicus (strain VF5).